Reading from the N-terminus, the 563-residue chain is Dihydroxy-acid dehydratase (563 aa).

[2Fe-2S] cluster is bound at residue Cys-50. Position 82 (Asp-82) interacts with Mg(2+). A [2Fe-2S] cluster-binding site is contributed by Cys-123. Mg(2+)-binding residues include Asp-124 and Lys-125. Lys-125 is subject to N6-carboxylysine. Cys-195 contacts [2Fe-2S] cluster. Residue Glu-447 coordinates Mg(2+). Ser-473 serves as the catalytic Proton acceptor.

It belongs to the IlvD/Edd family. In terms of assembly, homodimer. Requires [2Fe-2S] cluster as cofactor. Mg(2+) is required as a cofactor.

It catalyses the reaction (2R)-2,3-dihydroxy-3-methylbutanoate = 3-methyl-2-oxobutanoate + H2O. It carries out the reaction (2R,3R)-2,3-dihydroxy-3-methylpentanoate = (S)-3-methyl-2-oxopentanoate + H2O. It functions in the pathway amino-acid biosynthesis; L-isoleucine biosynthesis; L-isoleucine from 2-oxobutanoate: step 3/4. Its pathway is amino-acid biosynthesis; L-valine biosynthesis; L-valine from pyruvate: step 3/4. Its function is as follows. Functions in the biosynthesis of branched-chain amino acids. Catalyzes the dehydration of (2R,3R)-2,3-dihydroxy-3-methylpentanoate (2,3-dihydroxy-3-methylvalerate) into 2-oxo-3-methylpentanoate (2-oxo-3-methylvalerate) and of (2R)-2,3-dihydroxy-3-methylbutanoate (2,3-dihydroxyisovalerate) into 2-oxo-3-methylbutanoate (2-oxoisovalerate), the penultimate precursor to L-isoleucine and L-valine, respectively. This is Dihydroxy-acid dehydratase from Nostoc sp. (strain PCC 7120 / SAG 25.82 / UTEX 2576).